A 532-amino-acid chain; its full sequence is Eukaryotic translation initiation factor 4B1 (532 aa).

Disordered stretches follow at residues 16–365, 401–434, and 451–532; these read EAER…LEEQ, KKLE…IIRG, and RFRQ…REGW. Positions 26-35 are enriched in low complexity; sequence AEATAATADT. 2 stretches are compositionally biased toward gly residues: residues 105-120 and 132-147; these read RLGG…SGGR and WSGG…YGGG. Basic and acidic residues predominate over residues 167 to 180; the sequence is RADEVDDWGKEKKP. Residues 177–184 carry the Nuclear localization signal 1 motif; sequence EKKPLPSF. Residues 193 to 217 are compositionally biased toward gly residues; sequence SGDGGGFGGGGSGFGGGGGGGGGGL. A Nuclear localization signal 2 motif is present at residues 237–244; the sequence is SSTFGSSF. Over residues 237–247 the composition is skewed to low complexity; the sequence is SSTFGSSFGDS. 2 stretches are compositionally biased toward basic and acidic residues: residues 249 to 263 and 286 to 310; these read QEER…RKVE and RPRE…EAKK. A compositionally biased stretch (low complexity) spans 315-337; sequence TSRPTSAHSSRPSSAQSNRSESS. Composition is skewed to basic and acidic residues over residues 355 to 365, 401 to 416, 472 to 494, and 507 to 520; these read AKPREVLLEEQ, KKLE…KESD, ERTH…ERPR, and NEQR…KERG.

This sequence belongs to the eIF-4 subunit B family. As to quaternary structure, homodimer. Nonspherical monomer. mRNA-discriminating component of initiation complexes. Post-translationally, phosphorylated.

Its subcellular location is the nucleus. Promotes the eIF4F and eIF4A RNA-dependent ATP-hydrolysis activity with different efficiency depending on mRNAs, thus providing mRNA discrimination during initiation of translation. The sequence is that of Eukaryotic translation initiation factor 4B1 from Arabidopsis thaliana (Mouse-ear cress).